Reading from the N-terminus, the 505-residue chain is Catalase (505 aa).

A disordered region spans residues 1-25 (MSQQDKKLTGVFGHPVSDRENSMTA). Residues H56 and N129 contribute to the active site. Y339 lines the heme pocket.

This sequence belongs to the catalase family. In terms of assembly, homodimer. Heme is required as a cofactor.

It carries out the reaction 2 H2O2 = O2 + 2 H2O. Its function is as follows. Decomposes hydrogen peroxide into water and oxygen; serves to protect cells from the toxic effects of hydrogen peroxide. In Staphylococcus aureus, this protein is Catalase (katA).